Reading from the N-terminus, the 588-residue chain is Aspartate--tRNA ligase (588 aa).

L-aspartate is bound at residue Glu172. The segment at 196–199 (QLFK) is aspartate. Arg218 contacts L-aspartate. Residues 218 to 220 (RDE) and Gln227 each bind ATP. His449 is a binding site for L-aspartate. ATP is bound at residue Glu483. Arg490 contributes to the L-aspartate binding site. 535 to 538 (GLDR) lines the ATP pocket.

The protein belongs to the class-II aminoacyl-tRNA synthetase family. Type 1 subfamily. As to quaternary structure, homodimer.

The protein localises to the cytoplasm. It carries out the reaction tRNA(Asp) + L-aspartate + ATP = L-aspartyl-tRNA(Asp) + AMP + diphosphate. Functionally, catalyzes the attachment of L-aspartate to tRNA(Asp) in a two-step reaction: L-aspartate is first activated by ATP to form Asp-AMP and then transferred to the acceptor end of tRNA(Asp). This Haemophilus influenzae (strain 86-028NP) protein is Aspartate--tRNA ligase.